A 176-amino-acid chain; its full sequence is Translation initiation factor IF-3 (176 aa).

Belongs to the IF-3 family. In terms of assembly, monomer.

Its subcellular location is the cytoplasm. Its function is as follows. IF-3 binds to the 30S ribosomal subunit and shifts the equilibrium between 70S ribosomes and their 50S and 30S subunits in favor of the free subunits, thus enhancing the availability of 30S subunits on which protein synthesis initiation begins. The sequence is that of Translation initiation factor IF-3 from Streptococcus pyogenes serotype M18 (strain MGAS8232).